A 534-amino-acid polypeptide reads, in one-letter code: Protoheme IX farnesyltransferase (534 aa).

The unknown stretch occupies residues 1–251 (MRREHARAIL…VLLEGKPSLL (251 aa)). 15 helical membrane-spanning segments follow: residues 17–37 (PWLL…GGIV), 39–59 (ALTG…ALAI), 83–103 (YLTL…FGAI), 128–148 (LALA…ALAV), 163–183 (VAWA…QVLL), 197–217 (LMHL…TTLA), 261–281 (GVIS…PAGI), 284–304 (LSLV…SHSI), 339–359 (IALG…LAAI), 360–380 (LALA…KRTS), 384–404 (IVIG…AVTG), 411–431 (LLLW…LALI), 457–477 (IVIY…LGML), 479–499 (WAYL…ALKL), and 508–528 (AWAL…AMAV). The interval 252–530 (KDYISLTKPG…ILFVAMAVDR (279 aa)) is protoheme IX prenyltransferase.

This sequence in the C-terminal section; belongs to the UbiA prenyltransferase family. Protoheme IX farnesyltransferase subfamily.

Its subcellular location is the cell membrane. It carries out the reaction heme b + (2E,6E)-farnesyl diphosphate + H2O = Fe(II)-heme o + diphosphate. It participates in porphyrin-containing compound metabolism; heme O biosynthesis; heme O from protoheme: step 1/1. Its function is as follows. Converts heme B (protoheme IX) to heme O by substitution of the vinyl group on carbon 2 of heme B porphyrin ring with a hydroxyethyl farnesyl side group. The sequence is that of Protoheme IX farnesyltransferase (ctaB) from Roseiflexus sp. (strain RS-1).